The primary structure comprises 124 residues: Type-4 ice-structuring protein (124 aa).

An N-terminal signal peptide occupies residues 1-20; that stretch reads MKFSLIAAVALLALAQGSFA. Residue Gln-21 is modified to Pyrrolidone carboxylic acid.

The protein belongs to the apolipoprotein A1/A4/E family.

The protein localises to the secreted. Antifreeze proteins lower the blood freezing point. The protein is Type-4 ice-structuring protein of Paralichthys olivaceus (Bastard halibut).